The sequence spans 509 residues: Oligo-1,6-glucosidase (509 aa).

The active-site Nucleophile is the aspartate 198. Glutamate 254 acts as the Proton donor in catalysis.

It belongs to the glycosyl hydrolase 13 family.

It localises to the cytoplasm. It catalyses the reaction Hydrolysis of (1-&gt;6)-alpha-D-glucosidic linkages in some oligosaccharides produced from starch and glycogen by alpha-amylase, and in isomaltose.. The sequence is that of Oligo-1,6-glucosidase (malL) from Bacillus sp. (strain F5).